Reading from the N-terminus, the 206-residue chain is Small ribosomal subunit protein eS1 (206 aa).

It belongs to the eukaryotic ribosomal protein eS1 family.

This chain is Small ribosomal subunit protein eS1, found in Natronomonas pharaonis (strain ATCC 35678 / DSM 2160 / CIP 103997 / JCM 8858 / NBRC 14720 / NCIMB 2260 / Gabara) (Halobacterium pharaonis).